The following is a 378-amino-acid chain: Holliday junction branch migration complex subunit RuvB 1 (378 aa).

Residues 1–12 (MAIISSRDTGQN) show a composition bias toward polar residues. Residues 1-62 (MAIISSRDTG…PGEAQEESLR (62 aa)) form a disordered region. Residues 13 to 222 (AEGPKRRQQK…FGHVQRLRFY (210 aa)) form a large ATPase domain (RuvB-L) region. Residues leucine 61, arginine 62, glycine 103, lysine 106, threonine 107, threonine 108, 169 to 171 (EDF), arginine 212, tyrosine 222, and arginine 259 each bind ATP. A Mg(2+)-binding site is contributed by threonine 107. Positions 223 to 293 (EPHELVQIVL…VAAAALELFQ (71 aa)) are small ATPAse domain (RuvB-S). A head domain (RuvB-H) region spans residues 296 to 378 (PMGLDWIDRK…EAQSPLPLWS (83 aa)). DNA-binding residues include arginine 351 and arginine 356.

Belongs to the RuvB family. In terms of assembly, homohexamer. Forms an RuvA(8)-RuvB(12)-Holliday junction (HJ) complex. HJ DNA is sandwiched between 2 RuvA tetramers; dsDNA enters through RuvA and exits via RuvB. An RuvB hexamer assembles on each DNA strand where it exits the tetramer. Each RuvB hexamer is contacted by two RuvA subunits (via domain III) on 2 adjacent RuvB subunits; this complex drives branch migration. In the full resolvosome a probable DNA-RuvA(4)-RuvB(12)-RuvC(2) complex forms which resolves the HJ.

It localises to the cytoplasm. It catalyses the reaction ATP + H2O = ADP + phosphate + H(+). The RuvA-RuvB-RuvC complex processes Holliday junction (HJ) DNA during genetic recombination and DNA repair, while the RuvA-RuvB complex plays an important role in the rescue of blocked DNA replication forks via replication fork reversal (RFR). RuvA specifically binds to HJ cruciform DNA, conferring on it an open structure. The RuvB hexamer acts as an ATP-dependent pump, pulling dsDNA into and through the RuvAB complex. RuvB forms 2 homohexamers on either side of HJ DNA bound by 1 or 2 RuvA tetramers; 4 subunits per hexamer contact DNA at a time. Coordinated motions by a converter formed by DNA-disengaged RuvB subunits stimulates ATP hydrolysis and nucleotide exchange. Immobilization of the converter enables RuvB to convert the ATP-contained energy into a lever motion, pulling 2 nucleotides of DNA out of the RuvA tetramer per ATP hydrolyzed, thus driving DNA branch migration. The RuvB motors rotate together with the DNA substrate, which together with the progressing nucleotide cycle form the mechanistic basis for DNA recombination by continuous HJ branch migration. Branch migration allows RuvC to scan DNA until it finds its consensus sequence, where it cleaves and resolves cruciform DNA. In Synechococcus sp. (strain JA-3-3Ab) (Cyanobacteria bacterium Yellowstone A-Prime), this protein is Holliday junction branch migration complex subunit RuvB 1.